The chain runs to 483 residues: Probable zinc metalloprotease PTRG_04977 (483 aa).

The signal sequence occupies residues 1 to 18 (MLFRSALLSNVLLLPACA). Asn96 and Asn121 each carry an N-linked (GlcNAc...) asparagine glycan. 3 residues coordinate Zn(2+): His167, Asp187, and Glu220. The N-linked (GlcNAc...) asparagine glycan is linked to Asn235. Asp247 serves as a coordination point for Zn(2+). N-linked (GlcNAc...) asparagine glycans are attached at residues Asn310, Asn362, Asn401, Asn411, and Asn421. The Fibronectin type-III domain maps to 396 to 483 (PAMPRNVTID…KSPAVYPFPG (88 aa)).

Belongs to the peptidase M28 family. M28B subfamily. Requires Zn(2+) as cofactor.

It is found in the secreted. The protein is Probable zinc metalloprotease PTRG_04977 of Pyrenophora tritici-repentis (strain Pt-1C-BFP) (Wheat tan spot fungus).